We begin with the raw amino-acid sequence, 408 residues long: GPI transamidase component GAB1 homolog (408 aa).

10 helical membrane passes run Leu9 to Ala29, Val66 to Ile86, Val88 to Ala108, Pro125 to Cys145, Met149 to Ile169, Ile207 to Asn227, Phe266 to Leu286, Leu303 to Phe323, Ala339 to Cys359, and Leu370 to Val390. A may be involved in recognition of long-chain fatty acids in GPI region spans residues Pro247 to Phe267.

This sequence belongs to the PIGU family. Forms a complex with PIG-S homolog, PIG-T homolog and GPI8.

Its subcellular location is the endoplasmic reticulum membrane. Its pathway is glycolipid biosynthesis; glycosylphosphatidylinositol-anchor biosynthesis. Its function is as follows. Component of the GPI transamidase complex. May be involved in the recognition of either the GPI attachment signal or the lipid portion of GPI. In Schizosaccharomyces pombe (strain 972 / ATCC 24843) (Fission yeast), this protein is GPI transamidase component GAB1 homolog.